Here is a 160-residue protein sequence, read N- to C-terminus: SsrA-binding protein (160 aa).

The protein belongs to the SmpB family.

It is found in the cytoplasm. Functionally, required for rescue of stalled ribosomes mediated by trans-translation. Binds to transfer-messenger RNA (tmRNA), required for stable association of tmRNA with ribosomes. tmRNA and SmpB together mimic tRNA shape, replacing the anticodon stem-loop with SmpB. tmRNA is encoded by the ssrA gene; the 2 termini fold to resemble tRNA(Ala) and it encodes a 'tag peptide', a short internal open reading frame. During trans-translation Ala-aminoacylated tmRNA acts like a tRNA, entering the A-site of stalled ribosomes, displacing the stalled mRNA. The ribosome then switches to translate the ORF on the tmRNA; the nascent peptide is terminated with the 'tag peptide' encoded by the tmRNA and targeted for degradation. The ribosome is freed to recommence translation, which seems to be the essential function of trans-translation. The sequence is that of SsrA-binding protein from Dinoroseobacter shibae (strain DSM 16493 / NCIMB 14021 / DFL 12).